The chain runs to 222 residues: Riboflavin kinase (222 aa).

The segment at 1-92 (MVLAEDLECL…CRLFAHEGGH (92 aa)) is H-T-H motif-like. Residues 93-222 (YTLPGIVISG…DRVNVEVAYD (130 aa)) form a riboflavin kinase region. CDP is bound at residue 102-107 (GLGEGR). Mg(2+) is bound by residues threonine 131 and asparagine 133. The FMN site is built by serine 188 and glutamate 196. A CDP-binding site is contributed by 201–204 (VGLR).

This sequence belongs to the archaeal riboflavin kinase family. Mg(2+) serves as cofactor.

The catalysed reaction is riboflavin + CTP = CDP + FMN + H(+). It functions in the pathway cofactor biosynthesis; FMN biosynthesis; FMN from riboflavin (CTP route): step 1/1. In terms of biological role, catalyzes the CTP-dependent phosphorylation of riboflavin (vitamin B2) to form flavin mononucleotide (FMN). The polypeptide is Riboflavin kinase (ribK) (Methanoregula boonei (strain DSM 21154 / JCM 14090 / 6A8)).